A 116-amino-acid polypeptide reads, in one-letter code: Nitrogen regulatory PII-like protein (116 aa).

It belongs to the P(II) protein family. Needs to interact with NrgA in order to localize correctly to the membrane.

It is found in the cell membrane. In terms of biological role, required for full induction of the nrgAB operon under conditions of ammonium limitation. The chain is Nitrogen regulatory PII-like protein (nrgB) from Bacillus subtilis (strain 168).